Consider the following 654-residue polypeptide: Pentatricopeptide repeat-containing protein At3g16610 (654 aa).

17 PPR repeats span residues 1-32, 34-64, 67-101, 102-136, 137-171, 172-203, 204-238, 239-269, 270-304, 307-341, 342-372, 373-407, 408-442, 443-473, 474-508, 509-543, and 546-576; these read MFLS…SLTL, SSTV…IPHP, NPIA…GVRP, TKYT…DFAT, DMYV…DMVA, WNAM…GLSP, NLST…GFSN, DLVV…DFKK, NEVT…DNVA, TPVA…GFIL, DLTV…IGLK, DVIS…GIRP, DITT…GYAV, NTSI…MHKR, DIVS…GVNP, DEVT…DFNV, and RIDH…MPFE. The segment at 581–654 is type E motif; degenerate; it reads VLGTLLSACW…KTPGYSWVDV (74 aa).

It belongs to the PPR family. PCMP-E subfamily.

The polypeptide is Pentatricopeptide repeat-containing protein At3g16610 (PCMP-E91) (Arabidopsis thaliana (Mouse-ear cress)).